Reading from the N-terminus, the 392-residue chain is MDALVEDDICILNHEKAHKRDTVTPVSIYSGDESVASHFALVTAYEDIKKRLKDSEKENSLLKKRIRFLEEKLIARFEEETSSVGREQVNKAYHAYREVCIDRDNLKSKLDKMNKDNSESLKVLNEQLQSKEVELLQLRTEVETQQVMRNLNPPSSNWEVEKLSCDLKIHGLEQELELMRKECSDLKIELQKAKQTDPYQEDNLKSRDLQKLSISSDNMQHAYWELKREMSNLHLVTQVQAELLRKLKTSTAIKKACAPVGCSEDLGRDSTKLHLMNFTATYTRHPPLLPNGKALCHTTSSPLPGDVKVLSEKAILQSWTDNERSIPNDGTCFQEHSSYGRNSLEDNSWVFPSPPKSSETAFGETKTKTLPLPNLPPLHYLDQHNQNCLYKN.

The segment at 1 to 197 is homodimerization; sequence MDALVEDDIC…IELQKAKQTD (197 aa). Coiled coils occupy residues 40-76 and 102-196; these read ALVT…LIAR and DRDN…AKQT. Residues 216–257 form an interaction with TBK1 and IKBKE region; sequence SDNMQHAYWELKREMSNLHLVTQVQAELLRKLKTSTAIKKAC. Residues S318 and S353 each carry the phosphoserine modification.

In terms of assembly, homodimer. Interacts with IKBKE. Interacts with TBK1. Interacts with TICAM1. Interacts with TAX1BP1. Interacts with CALCOCO2. (Microbial infection) Interacts with vaccinia virus protein C6. Post-translationally, ubiquitinated via 'Lys-48'-linked polyubiquitination by TRIM38, leading to its degradation. As to expression, widely expressed. Abundant expression seen in the pancreas and testis.

It localises to the cytoplasm. Its function is as follows. Adapter protein which binds TBK1 and IKBKE playing a role in antiviral innate immunity. Activates serine/threonine-protein kinase TBK1 and facilitates its oligomerization. Enhances the phosphorylation of NF-kappa-B p65 subunit RELA by TBK1. Promotes TBK1-induced as well as TNF-alpha or PMA-induced activation of NF-kappa-B. Participates in IFNB promoter activation via TICAM1. The protein is 5-azacytidine-induced protein 2 (AZI2) of Homo sapiens (Human).